A 365-amino-acid chain; its full sequence is tRNA N6-adenosine threonylcarbamoyltransferase (365 aa).

Positions 119 and 123 each coordinate Fe cation. Substrate-binding positions include 141-145 (LVSGG), Asp174, Gly187, and Asn288. Asp316 serves as a coordination point for Fe cation.

Belongs to the KAE1 / TsaD family. Fe(2+) serves as cofactor.

The protein resides in the cytoplasm. The catalysed reaction is L-threonylcarbamoyladenylate + adenosine(37) in tRNA = N(6)-L-threonylcarbamoyladenosine(37) in tRNA + AMP + H(+). In terms of biological role, required for the formation of a threonylcarbamoyl group on adenosine at position 37 (t(6)A37) in tRNAs that read codons beginning with adenine. Is involved in the transfer of the threonylcarbamoyl moiety of threonylcarbamoyl-AMP (TC-AMP) to the N6 group of A37, together with TsaE and TsaB. TsaD likely plays a direct catalytic role in this reaction. This chain is tRNA N6-adenosine threonylcarbamoyltransferase, found in Agrobacterium fabrum (strain C58 / ATCC 33970) (Agrobacterium tumefaciens (strain C58)).